Reading from the N-terminus, the 415-residue chain is Dynein assembly factor with WD repeat domains 1 (415 aa).

WD repeat units lie at residues 90 to 129, 132 to 174, 175 to 214, 217 to 256, 259 to 298, 301 to 340, 343 to 384, and 386 to 415; these read AHILPLTNVALNKSGSCFITGSYDRTCKLWDTASGEELNT, GHRN…HTFR, GHTAEIVCLSFNPQSTLVATGSMDTTAKLWDIQNGEEVYT, GHSAEIISLSFNTSGDRIITGSFDHTVVVWDADTGRKVNI, GHCAEISSASFNWDCSLILTGSMDKTCKLWDATNGKCVAT, GHDDEILDSCFDYTGKLIATASADGTARIFSAATRKCIAK, GHEG…QVLE, and HTDEIFSCAFNYKGNIVITGSKDNTCRIWR.

Belongs to the WD repeat WDR69 family. Interacts with IFT46.

It is found in the cytoplasm. It localises to the cytoskeleton. The protein localises to the flagellum basal body. The protein resides in the flagellum axoneme. Functionally, required for axonemal dynein assembly and ciliary motility in ciliated organs, including Kupffer's vesicle, during embryogenesis. Facilitates the onset of robust cilia motility during development. The protein is Dynein assembly factor with WD repeat domains 1 of Homo sapiens (Human).